A 207-amino-acid polypeptide reads, in one-letter code: Large ribosomal subunit protein eL13 (207 aa).

Belongs to the eukaryotic ribosomal protein eL13 family. Component of the 60S large ribosomal subunit (LSU).

It localises to the cytoplasm. In terms of biological role, component of the ribosome, a large ribonucleoprotein complex responsible for the synthesis of proteins in the cell. The small ribosomal subunit (SSU) binds messenger RNAs (mRNAs) and translates the encoded message by selecting cognate aminoacyl-transfer RNA (tRNA) molecules. The large subunit (LSU) contains the ribosomal catalytic site termed the peptidyl transferase center (PTC), which catalyzes the formation of peptide bonds, thereby polymerizing the amino acids delivered by tRNAs into a polypeptide chain. The nascent polypeptides leave the ribosome through a tunnel in the LSU and interact with protein factors that function in enzymatic processing, targeting, and the membrane insertion of nascent chains at the exit of the ribosomal tunnel. As part of the LSU, it is probably required for its formation and the maturation of rRNAs. The sequence is that of Large ribosomal subunit protein eL13 (rpl-13) from Caenorhabditis elegans.